The sequence spans 181 residues: Protein Syd (181 aa).

Belongs to the Syd family.

The protein localises to the cell inner membrane. Functionally, interacts with the SecY protein in vivo. May bind preferentially to an uncomplexed state of SecY, thus functioning either as a chelating agent for excess SecY in the cell or as a regulatory factor that negatively controls the translocase function. The protein is Protein Syd of Alteromonas mediterranea (strain DSM 17117 / CIP 110805 / LMG 28347 / Deep ecotype).